Here is a 172-residue protein sequence, read N- to C-terminus: Crossover junction endodeoxyribonuclease RuvC (172 aa).

Catalysis depends on residues D12, E71, and D143. Mg(2+) contacts are provided by D12, E71, and D143.

Belongs to the RuvC family. As to quaternary structure, homodimer which binds Holliday junction (HJ) DNA. The HJ becomes 2-fold symmetrical on binding to RuvC with unstacked arms; it has a different conformation from HJ DNA in complex with RuvA. In the full resolvosome a probable DNA-RuvA(4)-RuvB(12)-RuvC(2) complex forms which resolves the HJ. Mg(2+) is required as a cofactor.

Its subcellular location is the cytoplasm. The enzyme catalyses Endonucleolytic cleavage at a junction such as a reciprocal single-stranded crossover between two homologous DNA duplexes (Holliday junction).. Its function is as follows. The RuvA-RuvB-RuvC complex processes Holliday junction (HJ) DNA during genetic recombination and DNA repair. Endonuclease that resolves HJ intermediates. Cleaves cruciform DNA by making single-stranded nicks across the HJ at symmetrical positions within the homologous arms, yielding a 5'-phosphate and a 3'-hydroxyl group; requires a central core of homology in the junction. The consensus cleavage sequence is 5'-(A/T)TT(C/G)-3'. Cleavage occurs on the 3'-side of the TT dinucleotide at the point of strand exchange. HJ branch migration catalyzed by RuvA-RuvB allows RuvC to scan DNA until it finds its consensus sequence, where it cleaves and resolves the cruciform DNA. The sequence is that of Crossover junction endodeoxyribonuclease RuvC from Coxiella burnetii (strain CbuG_Q212) (Coxiella burnetii (strain Q212)).